The sequence spans 627 residues: Protein fem-1 homolog B (627 aa).

ANK repeat units lie at residues 45–74 (QRST…VQTQ), 87–116 (DGAT…NVNH), 120–149 (TNST…NISI), and 153–182 (YDNT…DPNA). The Zn(2+) site is built by histidine 185, cysteine 186, and histidine 218. ANK repeat units lie at residues 186–215 (CGAT…AIVV) and 218–248 (HGMT…DRRS). The stretch at 344-377 (SHPIIYRGAVYADNMEFEQCIKLWLHALHLRQKG) is one TPR repeat. ANK repeat units follow at residues 483–527 (EGFT…EVNA) and 531–568 (EGNS…HTDM).

This sequence belongs to the fem-1 family. Component of a CRL2 E3 ubiquitin-protein ligase complex, also named ECS (Elongin BC-CUL2/5-SOCS-box protein) complex, composed of CUL2, Elongin BC (ELOB and ELOC), RBX1 and substrate-specific adapter FEM1B. Homooligomer. Interacts with PPM1F and PHTF1. Interacts with the death domain of FAS/TNFRSF6 and TNFRSF1A. Interacts with CHEK1. Interacts with NKX3-1. In terms of tissue distribution, widely expressed. Highly expressed in testis. Weakly expressed in other tissues.

Its subcellular location is the cytoplasm. The protein localises to the nucleus. It participates in protein modification; protein ubiquitination. With respect to regulation, activity of the CRL2(FEM1B) complex toward FNIP1 is inhibited by BEX family proteins (BEX1, BEX2, BEX3, BEX4 and/or BEX5) in absence of reductive stress. Mechanistically, BEX proteins act as pseudosubstrate inhibitors that associate with FEM1B via zinc in absence of reductive stress, thereby preventing association between FEM1B and FNIP1. Functionally, substrate-recognition component of a Cul2-RING (CRL2) E3 ubiquitin-protein ligase complex of the DesCEND (destruction via C-end degrons) pathway, which recognizes a C-degron located at the extreme C terminus of target proteins, leading to their ubiquitination and degradation. The C-degron recognized by the DesCEND pathway is usually a motif of less than ten residues and can be present in full-length proteins, truncated proteins or proteolytically cleaved forms. The CRL2(FEM1B) complex specifically recognizes proteins ending with -Gly-Leu-Asp-Arg, such as CDK5R1, leading to their ubiquitination and degradation. Also acts as a regulator of the reductive stress response by mediating ubiquitination of reduced FNIP1: in response to reductive stress, the CRL2(FEM1B) complex specifically recognizes a conserved Cys degron in FNIP1 when this degron is reduced, leading to FNIP1 degradation and subsequent activation of mitochondria to recalibrate reactive oxygen species (ROS). Mechanistically, recognizes and binds reduced FNIP1 through two interface zinc ions, which act as a molecular glue that recruit reduced FNIP1 to FEM1B. Promotes ubiquitination of GLI1, suppressing GLI1 transcriptional activator activity. Promotes ubiquitination and degradation of ANKRD37. Promotes ubiquitination and degradation of SLBP. Involved in apoptosis by acting as a death receptor-associated protein that mediates apoptosis. Also involved in glucose homeostasis in pancreatic islet. May also act as an adapter/mediator in replication stress-induced signaling that leads to the activation of CHEK1. In Homo sapiens (Human), this protein is Protein fem-1 homolog B.